We begin with the raw amino-acid sequence, 289 residues long: Glyoxylate/succinic semialdehyde reductase 1 (289 aa).

Residue Met-1 is modified to N-acetylmethionine. NADP(+)-binding positions include 4–18 and Thr-95; that span reads GFLG…MSMN. Residue Lys-170 is part of the active site. Lys-238 contacts NADP(+).

Belongs to the HIBADH-related family. NP60 subfamily.

Its subcellular location is the cytoplasm. The protein localises to the cytosol. It carries out the reaction glycolate + NADP(+) = glyoxylate + NADPH + H(+). The enzyme catalyses 4-hydroxybutanoate + NADP(+) = succinate semialdehyde + NADPH + H(+). Its activity is regulated as follows. The ratio of NADPH/NADP(+) may regulate enzymatic activity. Its function is as follows. Catalyzes the NADPH-dependent reduction of glyoxylate to glycolate as well as succinic semialdehyde (SSA) to gamma-hydroxybutyrate in vitro. May function in redox homeostasis and play a role in oxidative stress tolerance by detoxifying glyoxylate and SSA generated in glycolate metabolism and GABA metabolism, respectively. This Arabidopsis thaliana (Mouse-ear cress) protein is Glyoxylate/succinic semialdehyde reductase 1 (GLYR1).